The sequence spans 1040 residues: MALCVHSFWATAVDTATSCHFISSENCLVLLQALKINIYLCSEVHGLQFFTSIPLFSTVKHIRPYRPPGLDRDYLFVVLNDDTYFSIYWDEDYQKVIVDHPPVRYRVTFPWNRNAKSYCLVDLRMRAIFLSIDEISMICIRILSAEERLKTGRSIDSGFPFSFPVHLIYDMCILNDSSTPTLVVLHSDGLDCYVTAFLLDLSSKSLGKGIRLFERVKPSMIMPFGKRGLLVFESLFIHCMYRGNFVTINGPCTTYMHWTPLKGQKMHYIVCDTNGYLFGVYSSILGKNKWSLVMERLPIPPFDFITSLNSIHEGLLFIGSKNSESKLINLSTLKDVDSIPNLGPIHDLLVLKNDIEKSFLVCAGTPRNASLIYFQHALKLDILGQTKISGILRAMVLPSYPEHKLFLGFPSETVAFNIKEDFQLELDPSLSTKERTIALSGTNGEFVQVTSTFLCIYDSAKRSRLVYIEKITNAACYQEYSAIVINGTALAIFKKDTEVARKVFESEISCLDFSAQFQIGVGFWSKQVMILTFSDNSSISCAFQTNVPSLPRNIILEGVGVDRNLLLVSSGSGEFKSYVLFKNNLVFSETKHFGTTPVSFRRFTMNIGTYIICNNDCPHMVYGFNGALCYMPLSMPQSYDVCQFRDNSGKDFLISVSLGGLKFLQLNPLPELTPRKVLLEHVPLQAIIFQNKLLLRTLENRYEDYESYKENYHLELVDSYDDNSFRVFSFTENERCEKVLKINESSLLVGTSIIEQDKLVPVNGRLILLEFEKELQSLKVVSSMVLSAAVIDLGVYNDRYIVAFGQQVAIVKLTEERLMIDSRISLGSIVLQLIVEGNEIAIADSIGRFTIMYFDGQKFIVVARYLFGENIVKAALYEGTVYIIATNSGLLKLLRYNKDAKNFNDRFICESVYHLHDKVSKFQNFPITNTNSFLEPKMLFATEIGAIGSIVSLKDKELELEELTRKIRKLKFSYLSSMDYESIEADLISPVPFIDGDLVIDVKRWASSELFRLCRSVEHRESLNSYQKVQALLEEIQSLC.

It belongs to the DDB1 family. As to quaternary structure, component of the Clr4 methyltransferase complex (ClrC) composed of at least clr4, rik1, pcu4, rbx1, raf1 and raf2. The cullin pcu4, rik1, raf1, raf2 and the ring-box protein rbx1 are components of an E3 ubiquitin ligase, whose activity is essential for heterochromatin assembly.

It is found in the nucleus. The protein localises to the cytoplasm. Its subcellular location is the cytoskeleton. It localises to the microtubule organizing center. The protein resides in the spindle pole body. It is found in the chromosome. In terms of biological role, component of the Clr4 methyltransferase complex (ClrC) which contributes to the establishment of heterochromatin by specifically methylating histone H3 to form H3K9me. ClrC preferentially ubiquitylates H3K14 and ClrC-mediated H3 ubiquitination promotes clr4 methyltransferase activity for the methylation of H3K9. H3K9me represents a specific tag for epigenetic transcriptional repression by recruiting swi6/HP1 to methylated histones which leads to transcriptional silencing within centromeric heterochromatin, telomeric regions and at the silent mating-type loci. Rik1 is involved in the RNAi-mediated targeting of ClrC to heterochromatic repeat elements. Rik1 also has a function in meiotic telomere clustering. The polypeptide is Chromatin modification-related protein rik1 (rik1) (Schizosaccharomyces pombe (strain 972 / ATCC 24843) (Fission yeast)).